A 44-amino-acid chain; its full sequence is Photosystem I reaction center subunit IX (44 aa).

The chain crosses the membrane as a helical span at residues 7–27 (YLSTAPVLATLWFSSLAGLLI).

The protein belongs to the PsaJ family.

The protein localises to the plastid. The protein resides in the chloroplast thylakoid membrane. Functionally, may help in the organization of the PsaE and PsaF subunits. The polypeptide is Photosystem I reaction center subunit IX (Welwitschia mirabilis (Tree tumbo)).